An 89-amino-acid chain; its full sequence is Small ribosomal subunit protein uS15 (89 aa).

The protein belongs to the universal ribosomal protein uS15 family. In terms of assembly, part of the 30S ribosomal subunit. Forms a bridge to the 50S subunit in the 70S ribosome, contacting the 23S rRNA.

In terms of biological role, one of the primary rRNA binding proteins, it binds directly to 16S rRNA where it helps nucleate assembly of the platform of the 30S subunit by binding and bridging several RNA helices of the 16S rRNA. Forms an intersubunit bridge (bridge B4) with the 23S rRNA of the 50S subunit in the ribosome. The protein is Small ribosomal subunit protein uS15 of Salmonella schwarzengrund (strain CVM19633).